Reading from the N-terminus, the 357-residue chain is Alanine racemase (357 aa).

Lys-33 functions as the Proton acceptor; specific for D-alanine in the catalytic mechanism. Residue Lys-33 is modified to N6-(pyridoxal phosphate)lysine. Arg-130 is a substrate binding site. Tyr-252 functions as the Proton acceptor; specific for L-alanine in the catalytic mechanism. Met-300 provides a ligand contact to substrate.

Belongs to the alanine racemase family. Pyridoxal 5'-phosphate is required as a cofactor.

It carries out the reaction L-alanine = D-alanine. It functions in the pathway amino-acid biosynthesis; D-alanine biosynthesis; D-alanine from L-alanine: step 1/1. In terms of biological role, catalyzes the interconversion of L-alanine and D-alanine. May also act on other amino acids. This Acidiphilium cryptum (strain JF-5) protein is Alanine racemase (alr).